Reading from the N-terminus, the 192-residue chain is uncharacterized protein (192 aa).

The Nudix hydrolase domain maps to 29 to 160 (HRQAAVLIPI…PLDIYRRGDS (132 aa)). The Nudix box motif lies at 67–89 (GAVDDTDASVIAAALREAEEEVA). Mg(2+)-binding residues include Glu83 and Glu87.

This sequence belongs to the Nudix hydrolase family. PCD1 subfamily. Mn(2+) serves as cofactor. It depends on Mg(2+) as a cofactor.

In terms of biological role, probably mediates the hydrolysis of some nucleoside diphosphate derivatives. This is an uncharacterized protein from Escherichia coli O139:H28 (strain E24377A / ETEC).